A 271-amino-acid chain; its full sequence is MSIKLIAVDMDGTFLSDQKTYNRERFMAQYQQMKAQGIRFVVASGNQYYQLISFFPEIANEIAFVAENGGWVVSEGKDVFNGELSKDAFATVVEHLLTRPEVEIIACGKNSAYTLKKYDDAMKTVAEMYYHRLEYVDNFDNLEDIFFKFGLNLSDELIPQVQKALHEAIGDIMVSVHTGNGSIDLIIPGVHKANGLRQLQKLWGIDDSEVVVFGDGGNDIEMLRQAGFSFAMENAGSAVVAAAKYRAGSNNREGVLDVIDKVLKHEAPFDQ.

The active-site Nucleophile is the aspartate 9. Aspartate 9 contacts Mg(2+). Phosphate is bound at residue methionine 10. Residue aspartate 11 participates in Mg(2+) binding. Residues 44 to 45 (SG) and lysine 192 contribute to the phosphate site. Aspartate 215 is a Mg(2+) binding site. Asparagine 218 contacts phosphate.

Belongs to the HAD-like hydrolase superfamily. Cof family. Requires Mg(2+) as cofactor. The cofactor is Mn(2+). Co(2+) is required as a cofactor. It depends on Zn(2+) as a cofactor.

The enzyme catalyses 5-amino-6-(5-phospho-D-ribitylamino)uracil + H2O = 5-amino-6-(D-ribitylamino)uracil + phosphate. It participates in cofactor biosynthesis; riboflavin biosynthesis; 5-amino-6-(D-ribitylamino)uracil from GTP: step 4/4. Functionally, catalyzes the dephosphorylation of 5-amino-6-(5-phospho-D-ribitylamino)uracil, and thus could be involved in the riboflavin biosynthesis pathway. Is also able to dephosphorylate flavin mononucleotide (FMN), erythrose 4-phosphate and other phosphoric acid esters. This Escherichia coli (strain K12) protein is 5-amino-6-(5-phospho-D-ribitylamino)uracil phosphatase YbjI (ybjI).